We begin with the raw amino-acid sequence, 499 residues long: Na(+)/H(+) antiporter NhaB (499 aa).

11 consecutive transmembrane segments (helical) span residues 33-53 (PVIFLISPYIAGWVLILEFIF), 66-86 (PGGLLAIEAVLIGMVSPHTVY), 89-109 (VSGNLEVILLLVFMVAGIYFM), 128-148 (AILSLLFSLVAAVLSAFLDAL), 237-257 (FIEFFVRMAPISIPVLIAGLI), 305-325 (AIVALILVVALALHLAEVGLI), 326-346 (GLTVIILATAFCGVIEEHQIG), 349-369 (FEEALPFTSLLVVFFAVVGVI), 393-413 (MFFIANGVLSMISDNVFVATV), 449-469 (ATPNGQAAFLFLLTSAIAPLI), and 477-497 (VWMALPYTLVMGGLGYVMIVI).

It belongs to the NhaB Na(+)/H(+) (TC 2.A.34) antiporter family.

It is found in the cell inner membrane. The catalysed reaction is 2 Na(+)(in) + 3 H(+)(out) = 2 Na(+)(out) + 3 H(+)(in). Functionally, na(+)/H(+) antiporter that extrudes sodium in exchange for external protons. This is Na(+)/H(+) antiporter NhaB from Hahella chejuensis (strain KCTC 2396).